Reading from the N-terminus, the 216-residue chain is Ribosomal RNA small subunit methyltransferase G (216 aa).

Residues glycine 81, phenylalanine 86, 130 to 131 (AE), and arginine 144 each bind S-adenosyl-L-methionine.

This sequence belongs to the methyltransferase superfamily. RNA methyltransferase RsmG family.

It localises to the cytoplasm. The catalysed reaction is guanosine(527) in 16S rRNA + S-adenosyl-L-methionine = N(7)-methylguanosine(527) in 16S rRNA + S-adenosyl-L-homocysteine. Its function is as follows. Specifically methylates the N7 position of guanine in position 527 of 16S rRNA. The chain is Ribosomal RNA small subunit methyltransferase G from Rhodospirillum centenum (strain ATCC 51521 / SW).